The sequence spans 382 residues: Galactokinase (382 aa).

34–37 serves as a coordination point for substrate; sequence EHTD. 124 to 130 serves as a coordination point for ATP; it reads GAGLSSS. Positions 130 and 162 each coordinate Mg(2+). Catalysis depends on aspartate 174, which acts as the Proton acceptor. Tyrosine 223 is a binding site for substrate.

This sequence belongs to the GHMP kinase family. GalK subfamily.

It localises to the cytoplasm. It carries out the reaction alpha-D-galactose + ATP = alpha-D-galactose 1-phosphate + ADP + H(+). It participates in carbohydrate metabolism; galactose metabolism. In terms of biological role, catalyzes the transfer of the gamma-phosphate of ATP to D-galactose to form alpha-D-galactose-1-phosphate (Gal-1-P). The chain is Galactokinase from Salmonella paratyphi A (strain ATCC 9150 / SARB42).